The chain runs to 533 residues: 2,3-bisphosphoglycerate-independent phosphoglycerate mutase (533 aa).

The Mn(2+) site is built by D15 and S65. The Phosphoserine intermediate role is filled by S65. Residues H126, 156–157 (RD), R188, R194, 258–261 (RPDR), and K331 each bind substrate. 5 residues coordinate Mn(2+): D398, H402, D439, H440, and H457.

This sequence belongs to the BPG-independent phosphoglycerate mutase family. In terms of assembly, monomer. The cofactor is Mn(2+).

The enzyme catalyses (2R)-2-phosphoglycerate = (2R)-3-phosphoglycerate. Its pathway is carbohydrate degradation; glycolysis; pyruvate from D-glyceraldehyde 3-phosphate: step 3/5. Its function is as follows. Catalyzes the interconversion of 2-phosphoglycerate and 3-phosphoglycerate. In Trichormus variabilis (strain ATCC 29413 / PCC 7937) (Anabaena variabilis), this protein is 2,3-bisphosphoglycerate-independent phosphoglycerate mutase.